The following is a 229-amino-acid chain: Ribonuclease 3 (229 aa).

Residues 5 to 127 form the RNase III domain; that stretch reads LARLERKLGY…LIGAIYLDAD (123 aa). E40 serves as a coordination point for Mg(2+). D44 is a catalytic residue. Mg(2+) contacts are provided by D113 and E116. The active site involves E116. One can recognise a DRBM domain in the interval 154–224; sequence DPKTRLQEFL…AASALIALGV (71 aa).

The protein belongs to the ribonuclease III family. Homodimer. Mg(2+) serves as cofactor.

It is found in the cytoplasm. It catalyses the reaction Endonucleolytic cleavage to 5'-phosphomonoester.. Digests double-stranded RNA. Involved in the processing of primary rRNA transcript to yield the immediate precursors to the large and small rRNAs (23S and 16S). Processes some mRNAs, and tRNAs when they are encoded in the rRNA operon. Processes pre-crRNA and tracrRNA of type II CRISPR loci if present in the organism. The polypeptide is Ribonuclease 3 (Pseudomonas putida (strain GB-1)).